Reading from the N-terminus, the 246-residue chain is uncharacterized protein (246 aa).

10–34 serves as a coordination point for NADP(+); that stretch reads VITGASSGIGEETVNLLSENGAKLV. A substrate-binding site is contributed by serine 140. The active-site Proton acceptor is tyrosine 153.

This sequence belongs to the short-chain dehydrogenases/reductases (SDR) family.

This is an uncharacterized protein from Staphylococcus saprophyticus subsp. saprophyticus (strain ATCC 15305 / DSM 20229 / NCIMB 8711 / NCTC 7292 / S-41).